Here is a 374-residue protein sequence, read N- to C-terminus: Serpin B8 (374 aa).

It belongs to the serpin family. Ov-serpin subfamily.

It localises to the cytoplasm. Functionally, has an important role in epithelial desmosome-mediated cell-cell adhesion. In Homo sapiens (Human), this protein is Serpin B8 (SERPINB8).